The primary structure comprises 301 residues: Thyrotroph embryonic factor (301 aa).

Disordered stretches follow at residues 1–70 and 130–174; these read MSDA…ASTM and ESAS…DPSC. Ser30 carries the post-translational modification Phosphoserine. Basic and acidic residues predominate over residues 39 to 59; sequence KLMENPPRETRLDKEKGKEKL. The segment covering 131-158 has biased composition (low complexity); that stretch reads SASSSTASPPSSSTAIFQPSETVSSTES. One can recognise a bZIP domain in the interval 231 to 294; it reads DEKYWTRRKK…GKCKTIVSKY (64 aa). The interval 233–253 is basic motif; sequence KYWTRRKKNNVAAKRSRDARR. Positions 254-261 are leucine-zipper; it reads LKENQITI.

Belongs to the bZIP family. PAR subfamily. Binds DNA as a homodimer or a heterodimer. Can form a heterodimer with DBP. As to expression, isoform Alpha and isoform Beta are expressed at high levels in lung, bladder, kidney, gut and brain.

The protein resides in the nucleus. Transcription factor that binds to and transactivates the TSHB promoter. Binds to a minimal DNA-binding sequence 5'-[TC][AG][AG]TTA[TC][AG]-3'. Also activates the telokin promoter in smooth muscle-specific and calcium-dependent manner. The sequence is that of Thyrotroph embryonic factor (Tef) from Mus musculus (Mouse).